The primary structure comprises 307 residues: MTQVNLLSELNSIASEGRNIDTLDIDTLPTLAILEKINQEDHKVAAAVSAAMADITSGVEAIVSSFNRGGRLVYMGAGTSGRLGILDAVECMPTFSVPEGMVIGLIAGGEKAVIHAVEGAEDDRAMGVADLKALNFSDKDTLVGIAASGRTPYVAAGLEYAKQCKATTIAVNCSPNSVIGQIADIDICAQVGPEVLTGSTRLKSGTAQKLILNMLSTASMIRIGKTYQNLMVDLNASNQKLYARAVRIVMQATDCEEQTAYEALDHANKEVKVAILMILTGVDVQQAREKLAQKQGFLRHAMSQGES.

The 164-residue stretch at 62–225 (IVSSFNRGGR…STASMIRIGK (164 aa)) folds into the SIS domain. Catalysis depends on glutamate 90, which acts as the Proton donor. Glutamate 121 is an active-site residue.

This sequence belongs to the GCKR-like family. MurNAc-6-P etherase subfamily. In terms of assembly, homodimer.

The enzyme catalyses N-acetyl-D-muramate 6-phosphate + H2O = N-acetyl-D-glucosamine 6-phosphate + (R)-lactate. It functions in the pathway amino-sugar metabolism; 1,6-anhydro-N-acetylmuramate degradation. The protein operates within amino-sugar metabolism; N-acetylmuramate degradation. Its pathway is cell wall biogenesis; peptidoglycan recycling. Functionally, specifically catalyzes the cleavage of the D-lactyl ether substituent of MurNAc 6-phosphate, producing GlcNAc 6-phosphate and D-lactate. Together with AnmK, is also required for the utilization of anhydro-N-acetylmuramic acid (anhMurNAc) either imported from the medium or derived from its own cell wall murein, and thus plays a role in cell wall recycling. This Pseudoalteromonas atlantica (strain T6c / ATCC BAA-1087) protein is N-acetylmuramic acid 6-phosphate etherase.